A 115-amino-acid polypeptide reads, in one-letter code: NADH-ubiquinone oxidoreductase chain 3 (115 aa).

3 helical membrane-spanning segments follow: residues 3 to 23, 55 to 75, and 86 to 106; these read LMAT…IAFW, FFLV…LLPL, and LTLL…AYEW.

This sequence belongs to the complex I subunit 3 family. Core subunit of respiratory chain NADH dehydrogenase (Complex I) which is composed of 45 different subunits. Interacts with TMEM186. Interacts with TMEM242.

It is found in the mitochondrion inner membrane. It carries out the reaction a ubiquinone + NADH + 5 H(+)(in) = a ubiquinol + NAD(+) + 4 H(+)(out). Core subunit of the mitochondrial membrane respiratory chain NADH dehydrogenase (Complex I) which catalyzes electron transfer from NADH through the respiratory chain, using ubiquinone as an electron acceptor. Essential for the catalytic activity of complex I. The polypeptide is NADH-ubiquinone oxidoreductase chain 3 (Mammuthus primigenius (Siberian woolly mammoth)).